The sequence spans 399 residues: Glutathione-independent formaldehyde dehydrogenase (399 aa).

Cys47 serves as a coordination point for Zn(2+). NAD(+) is bound by residues Gly48, Ser49, and His52. Residues His68, Cys98, Cys101, Cys104, Cys112, and Asp170 each coordinate Zn(2+). Val198, Asp218, Arg223, Val263, Arg268, Pro300, Gln338, and Thr339 together coordinate NAD(+).

This sequence belongs to the zinc-containing alcohol dehydrogenase family. As to quaternary structure, homotetramer. Zn(2+) is required as a cofactor.

It catalyses the reaction formaldehyde + NAD(+) + H2O = formate + NADH + 2 H(+). The catalysed reaction is acetaldehyde + NAD(+) + H2O = acetate + NADH + 2 H(+). Dehydrogenase that catalyzes the NAD(+)-dependent oxidation of formaldehyde and acetaldehyde. Shows no detectable activity against either aldehydes with longer carbon chains or ethanol. This chain is Glutathione-independent formaldehyde dehydrogenase, found in Pseudomonas aeruginosa (strain LESB58).